Consider the following 182-residue polypeptide: MSSPVRVLDELDAELRAASGLVREVPDFPEPGVLFRDISPMLADGRALAAVVAALGRGHDFDVVAGVEARGFLLGAAVAQAHGTGVVGLRKPGKLPEVAHRVDYRLEYGSASLELPAGTLRAGQRVLVVDDVLATGGTLNAACELVRSAGSEVAAATVVLELTALGGRNKVPDVALHALLTA.

Belongs to the purine/pyrimidine phosphoribosyltransferase family. In terms of assembly, homodimer.

Its subcellular location is the cytoplasm. It catalyses the reaction AMP + diphosphate = 5-phospho-alpha-D-ribose 1-diphosphate + adenine. The protein operates within purine metabolism; AMP biosynthesis via salvage pathway; AMP from adenine: step 1/1. Functionally, catalyzes a salvage reaction resulting in the formation of AMP, that is energically less costly than de novo synthesis. The chain is Adenine phosphoribosyltransferase from Saccharopolyspora erythraea (strain ATCC 11635 / DSM 40517 / JCM 4748 / NBRC 13426 / NCIMB 8594 / NRRL 2338).